Here is a 122-residue protein sequence, read N- to C-terminus: T-cell receptor beta chain V region C5 (122 aa).

The signal sequence occupies residues 1-7 (ILLCAKH). The interval 8–103 (MEAAVTQSPR…TAVYFCASSG (96 aa)) is v segment. A disulfide bridge connects residues C31 and C99. Residues 104–108 (TGGAL) form a d segment region. The j segment stretch occupies residues 109–122 (DTQYFGPGTRLLVL).

This chain is T-cell receptor beta chain V region C5, found in Mus musculus (Mouse).